Here is a 467-residue protein sequence, read N- to C-terminus: Argininosuccinate lyase (467 aa).

Ser27, Asn114, and Thr159 together coordinate 2-(N(omega)-L-arginino)succinate. Catalysis depends on His160, which acts as the Proton acceptor. The active-site Proton donor is the Ser281. 2-(N(omega)-L-arginino)succinate-binding residues include Asn289, Tyr321, Gln326, and Lys329.

This sequence belongs to the lyase 1 family. Argininosuccinate lyase subfamily. Homotetramer.

It carries out the reaction 2-(N(omega)-L-arginino)succinate = fumarate + L-arginine. The protein operates within amino-acid biosynthesis; L-arginine biosynthesis; L-arginine from L-ornithine and carbamoyl phosphate: step 3/3. Its pathway is nitrogen metabolism; urea cycle; L-arginine and fumarate from (N(omega)-L-arginino)succinate: step 1/1. This chain is Argininosuccinate lyase (ASL), found in Aquarana catesbeiana (American bullfrog).